A 466-amino-acid chain; its full sequence is ATP synthase subunit beta (466 aa).

148–155 (GGAGVGKT) contributes to the ATP binding site.

It belongs to the ATPase alpha/beta chains family. In terms of assembly, F-type ATPases have 2 components, CF(1) - the catalytic core - and CF(0) - the membrane proton channel. CF(1) has five subunits: alpha(3), beta(3), gamma(1), delta(1), epsilon(1). CF(0) has three main subunits: a(1), b(2) and c(9-12). The alpha and beta chains form an alternating ring which encloses part of the gamma chain. CF(1) is attached to CF(0) by a central stalk formed by the gamma and epsilon chains, while a peripheral stalk is formed by the delta and b chains.

The protein resides in the cell inner membrane. It carries out the reaction ATP + H2O + 4 H(+)(in) = ADP + phosphate + 5 H(+)(out). Functionally, produces ATP from ADP in the presence of a proton gradient across the membrane. The catalytic sites are hosted primarily by the beta subunits. This Xylella fastidiosa (strain M23) protein is ATP synthase subunit beta.